The sequence spans 358 residues: Alanine racemase (358 aa).

The active-site Proton acceptor; specific for D-alanine is the Lys35. An N6-(pyridoxal phosphate)lysine modification is found at Lys35. Arg130 serves as a coordination point for substrate. The active-site Proton acceptor; specific for L-alanine is Tyr255. Met303 is a binding site for substrate.

Belongs to the alanine racemase family. Requires pyridoxal 5'-phosphate as cofactor.

It carries out the reaction L-alanine = D-alanine. It participates in amino-acid biosynthesis; D-alanine biosynthesis; D-alanine from L-alanine: step 1/1. Its function is as follows. Catalyzes the interconversion of L-alanine and D-alanine. May also act on other amino acids. In Shewanella sp. (strain ANA-3), this protein is Alanine racemase (alr).